Consider the following 815-residue polypeptide: Ent-sandaracopimara-8(14),15-diene synthase, chloroplastic (815 aa).

The N-terminal 38 residues, 1–38, are a transit peptide targeting the chloroplast; the sequence is MLPSSICSMGQIPRTSPHYYGMLPKQMSKGHPPMVTRA. Residues D550, D554, N696, T700, and E704 each coordinate Mg(2+). A DDXXD motif motif is present at residues 550–554; it reads DDFFD.

Belongs to the terpene synthase family. The cofactor is Mg(2+).

It is found in the plastid. Its subcellular location is the chloroplast. It carries out the reaction ent-copalyl diphosphate = ent-sandaracopimara-8(14),15-diene + diphosphate. The catalysed reaction is 9alpha-copalyl diphosphate = (12E)-9alpha-labda-8(17),12,14-triene + diphosphate. In terms of biological role, involved in the biosynthesis of oryzalexin A-F phytoalexins. Catalyzes the conversion of ent-copalyl diphosphate to the phytoalexin precursor ent-sandaracopimaradiene. The chain is Ent-sandaracopimara-8(14),15-diene synthase, chloroplastic from Oryza sativa subsp. japonica (Rice).